Consider the following 274-residue polypeptide: MSDRVGRPRVIRAPRFFCSLRPPALYPERVSLPGPDPFITATRNTDTMPEQSASVSPALSQPPAQAQVTGRFLRMLSIILELLAAVREADERAEFGGLTARARVLEAETNALEREIEDACLVAFAAGLSERELAFYLMVFRSLANLERVGDYAFSVARDLETYAPRARSSTLQDLLPLIRLLSEMVERLAYAFAERDLTAARDVMRLDFEQVDALYEQMQRASLTRLIERPEDNEVALTAGRMARNLERLGDHLVNVAERLETLMLHDQRAGLL.

This sequence belongs to the PhoU family.

This is an uncharacterized protein from Deinococcus radiodurans (strain ATCC 13939 / DSM 20539 / JCM 16871 / CCUG 27074 / LMG 4051 / NBRC 15346 / NCIMB 9279 / VKM B-1422 / R1).